We begin with the raw amino-acid sequence, 701 residues long: Heterodisulfide reductase subunit A-like protein (701 aa).

Position 152–175 (152–175 (GGGIAGIFAALDIANAGYKVYLVE)) interacts with FAD. Positions 239 to 268 (KQTWVDWDLCTGCGACTDVCPPKARVPDEF) constitute a 4Fe-4S ferredoxin-type 1 domain. Residues cysteine 248, cysteine 251, cysteine 254, cysteine 326, cysteine 627, cysteine 630, cysteine 633, cysteine 637, cysteine 660, cysteine 663, cysteine 666, and cysteine 670 each contribute to the [4Fe-4S] cluster site. 2 consecutive 4Fe-4S ferredoxin-type domains span residues 618-647 (LVSEVDKEKCSGCGICVPLCPYGAITMTKY) and 651-680 (MRAEINPALCKGCGVCAAACPSKAIKLHGF).

This sequence belongs to the HdrA family. The heterodisulfide reductase is composed of three subunits; HdlA, HdlB and HdlC. It forms a complex with the F420-non-reducing hydrogenase (Mvh), which provides the reducing equivalents to the heterodisulfide reductase. It depends on [4Fe-4S] cluster as a cofactor. The cofactor is FAD.

The protein resides in the cytoplasm. Has oxidoreductase activity. The Hdl and Mvh subunits may together mediate electron transfer from hydrogen to an unidentified electron acceptor on the cytoplasmic side of the membrane. The sequence is that of Heterodisulfide reductase subunit A-like protein (hdlA) from Archaeoglobus profundus (strain DSM 5631 / JCM 9629 / NBRC 100127 / Av18).